Consider the following 260-residue polypeptide: Recombination-promoting nuclease RpnD (260 aa).

The protein belongs to the Rpn/YhgA-like nuclease family.

A low activity DNA endonuclease probably yielding 3'-hydroxyl ends. Involved in RecA-independent recombination and horizontal gene transfer. The polypeptide is Recombination-promoting nuclease RpnD (rpnD) (Escherichia coli O157:H7).